We begin with the raw amino-acid sequence, 413 residues long: Histidine--tRNA ligase (413 aa).

Belongs to the class-II aminoacyl-tRNA synthetase family. In terms of assembly, homodimer.

The protein localises to the cytoplasm. It catalyses the reaction tRNA(His) + L-histidine + ATP = L-histidyl-tRNA(His) + AMP + diphosphate + H(+). This chain is Histidine--tRNA ligase, found in Wolbachia sp. subsp. Brugia malayi (strain TRS).